Here is a 466-residue protein sequence, read N- to C-terminus: NADPH:adrenodoxin oxidoreductase, mitochondrial (466 aa).

Residues Ala40, Glu61, Leu69, and Leu105 each contribute to the FAD site. Residues 176 to 179 (QGNV), 220 to 221 (RR), and Glu232 contribute to the NADP(+) site. Residues Trp379 and 386 to 388 (GVI) contribute to the FAD site. Residue Gly386 participates in NADP(+) binding.

It belongs to the ferredoxin--NADP reductase type 1 family. It depends on FAD as a cofactor. Expressed predominantly in prothoracic gland of the larval ring gland and nurse cells of the adult ovary. Low expression is all adult tissues examined.

Its subcellular location is the mitochondrion inner membrane. The enzyme catalyses 2 reduced [adrenodoxin] + NADP(+) + H(+) = 2 oxidized [adrenodoxin] + NADPH. It functions in the pathway steroid metabolism; cholesterol metabolism. Functionally, required for synthesis of steroid hormones, for olfactory sensory behavior and completion of the second larval molt (a steroid mediated developmental transition) and pupariation. The protein is NADPH:adrenodoxin oxidoreductase, mitochondrial (dare) of Drosophila melanogaster (Fruit fly).